Reading from the N-terminus, the 129-residue chain is Large-conductance mechanosensitive channel (129 aa).

3 consecutive transmembrane segments (helical) span residues 14–34 (IIDLAVAVVIGGAFGKIVTSL), 38–58 (IIMPLVGVLTGGIDLTASFVY), and 67–87 (LGVFLQSIIDFLIIAFAIFMA).

It belongs to the MscL family. Homopentamer.

Its subcellular location is the cell membrane. Channel that opens in response to stretch forces in the membrane lipid bilayer. May participate in the regulation of osmotic pressure changes within the cell. The protein is Large-conductance mechanosensitive channel of Lysinibacillus sphaericus (strain C3-41).